The chain runs to 101 residues: MAKTSAVEKNKRRRKSVAQQATKRAALKAIVMNQSLPIEDRFKATLKLASLPRDGSKTRIRNRCEVTGRPRAFYRKLKMSRIALRELGNSGKVPGIVKSSW.

Positions 1-21 are disordered; it reads MAKTSAVEKNKRRRKSVAQQA.

It belongs to the universal ribosomal protein uS14 family. Part of the 30S ribosomal subunit. Contacts proteins S3 and S10.

Its function is as follows. Binds 16S rRNA, required for the assembly of 30S particles and may also be responsible for determining the conformation of the 16S rRNA at the A site. In Agrobacterium fabrum (strain C58 / ATCC 33970) (Agrobacterium tumefaciens (strain C58)), this protein is Small ribosomal subunit protein uS14.